The chain runs to 84 residues: MPPHGHHHHGHHGHHEHVTYTTTPIVQPMVQPMPVYGQPPMMVQPQVVMGAPVVYPPTNVVIETSHHHGHHGHHGHHGHHGHFF.

2 stretches are compositionally biased toward basic residues: residues 1–15 (MPPH…HGHH) and 67–84 (HHGH…GHFF). Disordered stretches follow at residues 1–22 (MPPH…TYTT) and 64–84 (TSHH…GHFF).

This is an uncharacterized protein from Dictyostelium discoideum (Social amoeba).